The sequence spans 254 residues: Proteasome activator complex subunit 3 (254 aa).

The residue at position 2 (A2) is an N-acetylalanine. Phosphoserine occurs at positions 17 and 24. K195 is modified (N6-acetyllysine; by P300/CBP). S247 carries the phosphoserine; by CHEK2 modification.

Belongs to the PA28 family. In terms of assembly, homoheptamer; the stability of the heptamer is essential for the specific activation of the trypsine-like subunit and inhibition of the chymotrypsin-like and postglutamyl-preferring (PGPH) subunits of the proteasome. Interacts with p53/TP53 and MDM2. Interacts with MAP3K3. Associates with the proteasome. Interacts with CCAR2. Interacts with PSME3IP1 (via C-terminus); the interaction is direct and promotes the association of PSME3 with the 20S proteasome. Interacts with COIL; the interaction is inhibited by PSME3IP1. As to quaternary structure, (Microbial infection) Interacts with human cytomegalovirus UL27. Phosphorylated by MAP3K3. Phosphorylation at Ser-247 promotes its association with CCAR2. Post-translationally, acetylation at the major site Lys-195 is important for oligomerization and ability to degrade its target substrates. Deacetylated by SIRT1.

It is found in the nucleus. The protein resides in the cytoplasm. Subunit of the 11S REG-gamma (also called PA28-gamma) proteasome regulator, a doughnut-shaped homoheptamer which associates with the proteasome. 11S REG-gamma activates the trypsin-like catalytic subunit of the proteasome but inhibits the chymotrypsin-like and postglutamyl-preferring (PGPH) subunits. Facilitates the MDM2-p53/TP53 interaction which promotes ubiquitination- and MDM2-dependent proteasomal degradation of p53/TP53, limiting its accumulation and resulting in inhibited apoptosis after DNA damage. May also be involved in cell cycle regulation. Mediates CCAR2 and CHEK2-dependent SIRT1 inhibition. The protein is Proteasome activator complex subunit 3 (PSME3) of Homo sapiens (Human).